Consider the following 300-residue polypeptide: Ornithine carbamoyltransferase (300 aa).

Carbamoyl phosphate is bound by residues 49 to 52, Gln-76, Arg-100, and 127 to 130; these read STRT and HPCQ. Residues Asn-158, Asp-218, and 222–223 contribute to the L-ornithine site; that span reads SM. Residues 258-259 and Arg-286 contribute to the carbamoyl phosphate site; that span reads CL.

It belongs to the aspartate/ornithine carbamoyltransferase superfamily. OTCase family.

It localises to the cytoplasm. The catalysed reaction is carbamoyl phosphate + L-ornithine = L-citrulline + phosphate + H(+). It participates in amino-acid biosynthesis; L-arginine biosynthesis; L-arginine from L-ornithine and carbamoyl phosphate: step 1/3. In terms of biological role, reversibly catalyzes the transfer of the carbamoyl group from carbamoyl phosphate (CP) to the N(epsilon) atom of ornithine (ORN) to produce L-citrulline. In Oleidesulfovibrio alaskensis (strain ATCC BAA-1058 / DSM 17464 / G20) (Desulfovibrio alaskensis), this protein is Ornithine carbamoyltransferase.